A 349-amino-acid polypeptide reads, in one-letter code: Very-long-chain 3-oxoacyl-CoA reductase (349 aa).

The helical transmembrane segment at 19-39 (AIIFALLLGVFKLTVFSLKFA) threads the bilayer. NADP(+) contacts are provided by Val65, Asp119, Asn146, Tyr221, Lys225, Val254, and Ser256. Tyr221 acts as the Proton donor in catalysis. The active-site Lowers pKa of active site Tyr is Lys225.

This sequence belongs to the short-chain dehydrogenases/reductases (SDR) family.

The protein localises to the endoplasmic reticulum membrane. It catalyses the reaction a very-long-chain (3R)-3-hydroxyacyl-CoA + NADP(+) = a very-long-chain 3-oxoacyl-CoA + NADPH + H(+). It functions in the pathway lipid metabolism; fatty acid biosynthesis. Functionally, component of the microsomal membrane bound fatty acid elongation system, which produces the 26-carbon very long-chain fatty acids (VLCFA) from palmitate. Catalyzes the reduction of the 3-ketoacyl-CoA intermediate that is formed in each cycle of fatty acid elongation. VLCFAs serve as precursors for ceramide and sphingolipids. This chain is Very-long-chain 3-oxoacyl-CoA reductase, found in Candida albicans (strain SC5314 / ATCC MYA-2876) (Yeast).